The chain runs to 340 residues: Glycerol-3-phosphate dehydrogenase [NAD(P)+] (340 aa).

NADPH is bound by residues S23, W24, R43, K44, and K113. Positions 113, 141, and 143 each coordinate sn-glycerol 3-phosphate. An NADPH-binding site is contributed by A145. Positions 196, 249, 259, 260, and 261 each coordinate sn-glycerol 3-phosphate. The active-site Proton acceptor is the K196. Position 260 (R260) interacts with NADPH. E286 is an NADPH binding site.

The protein belongs to the NAD-dependent glycerol-3-phosphate dehydrogenase family.

It is found in the cytoplasm. It carries out the reaction sn-glycerol 3-phosphate + NAD(+) = dihydroxyacetone phosphate + NADH + H(+). It catalyses the reaction sn-glycerol 3-phosphate + NADP(+) = dihydroxyacetone phosphate + NADPH + H(+). It participates in membrane lipid metabolism; glycerophospholipid metabolism. Catalyzes the reduction of the glycolytic intermediate dihydroxyacetone phosphate (DHAP) to sn-glycerol 3-phosphate (G3P), the key precursor for phospholipid synthesis. The polypeptide is Glycerol-3-phosphate dehydrogenase [NAD(P)+] (Zymomonas mobilis subsp. mobilis (strain ATCC 31821 / ZM4 / CP4)).